Consider the following 470-residue polypeptide: Macrophage metalloelastase (470 aa).

The first 16 residues, 1–16 (MKFLLILLLQATASGA), serve as a signal peptide directing secretion. Residues 17-105 (LPLNSSTSLE…DVHHFREMPG (89 aa)) constitute a propeptide, activation peptide. The N-linked (GlcNAc...) asparagine glycan is linked to Asn-20. A Cysteine switch motif is present at residues 90 to 97 (PRCGVPDV). A Zn(2+)-binding site is contributed by Cys-92. Residues Asp-124 and Asp-158 each contribute to the Ca(2+) site. Residues His-168 and Asp-170 each contribute to the Zn(2+) site. Residues Asp-175, Gly-176, Gly-178, and Ile-180 each contribute to the Ca(2+) site. Zn(2+) is bound at residue His-183. The Ca(2+) site is built by Gly-190, Gly-192, and Asp-194. Residue His-196 coordinates Zn(2+). Positions 198, 199, and 201 each coordinate Ca(2+). Zn(2+) is bound at residue His-218. Glu-219 is a catalytic residue. Zn(2+) is bound by residues His-222 and His-228. Hemopexin repeat units lie at residues 279 to 328 (PALC…WPTL), 329 to 375 (PSGI…GFPN), 377 to 425 (VKKI…FQGI), and 426 to 470 (GPKI…WFGC). An intrachain disulfide couples Cys-282 to Cys-470. Asn-285 is a glycosylation site (N-linked (GlcNAc...) asparagine). Asp-289, Glu-333, Asp-381, and Asp-430 together coordinate Ca(2+).

The protein belongs to the peptidase M10A family. Ca(2+) is required as a cofactor. It depends on Zn(2+) as a cofactor. In terms of tissue distribution, found in alveolar macrophages but not in peripheral blood monocytes.

It localises to the secreted. The protein localises to the extracellular space. Its subcellular location is the extracellular matrix. The catalysed reaction is Hydrolysis of soluble and insoluble elastin. Specific cleavages are also produced at 14-Ala-|-Leu-15 and 16-Tyr-|-Leu-17 in the B chain of insulin.. May be involved in tissue injury and remodeling. Has significant elastolytic activity. Can accept large and small amino acids at the P1' site, but has a preference for leucine. Aromatic or hydrophobic residues are preferred at the P1 site, with small hydrophobic residues (preferably alanine) occupying P3. The chain is Macrophage metalloelastase (MMP12) from Homo sapiens (Human).